A 64-amino-acid polypeptide reads, in one-letter code: Conotoxin Im11.2 (64 aa).

The first 26 residues, 1–26 (MMFRLTSVSCFLLVIVCLNLVVLTNA), serve as a signal peptide directing secretion. Cystine bridges form between Cys-27–Cys-41, Cys-34–Cys-46, Cys-40–Cys-50, and Cys-45–Cys-54. Position 57 is an aspartic acid 1-amide (Asp-57). The propeptide occupies 61 to 64 (ATFQ).

The protein belongs to the conotoxin I2 superfamily. Expressed by the venom duct.

Its subcellular location is the secreted. The protein is Conotoxin Im11.2 of Conus imperialis (Imperial cone).